Reading from the N-terminus, the 366-residue chain is Probable quinol oxidase subunit 2 (366 aa).

The first 19 residues, 1–19, serve as a signal peptide directing secretion; the sequence is MSKFKSLLLLFGTLILLSG. C20 is lipidated: N-palmitoyl cysteine. C20 is lipidated: S-diacylglycerol cysteine. Transmembrane regions (helical) follow at residues 38 to 58 and 80 to 100; these read FLILYSIVFMLVICFVVLGMF and AIIETIWFVIPIIIVAALAIP. The disordered stretch occupies residues 330–366; the sequence is EPYNNEFKKDESKNAKEMKKISKDAQDQDNDDHGGGH. Residues 335–366 show a composition bias toward basic and acidic residues; that stretch reads EFKKDESKNAKEMKKISKDAQDQDNDDHGGGH.

Belongs to the cytochrome c oxidase subunit 2 family.

It is found in the cell membrane. The enzyme catalyses 2 a quinol + O2 = 2 a quinone + 2 H2O. Catalyzes quinol oxidation with the concomitant reduction of oxygen to water. Subunit II transfers the electrons from a quinol to the binuclear center of the catalytic subunit I. This chain is Probable quinol oxidase subunit 2 (qoxA), found in Staphylococcus aureus (strain bovine RF122 / ET3-1).